The primary structure comprises 639 residues: tRNA-dihydrouridine(47) synthase [NAD(P)(+)]-like (639 aa).

Composition is skewed to polar residues over residues 1–19 (MAES…TVTQ) and 54–65 (QTCSELSGNDAE). Disordered stretches follow at residues 1-20 (MAES…VTQK) and 52-122 (DKQT…HSQF). The segment covering 66-85 (NTVRAEDAAEPEAKRIKLDD) has biased composition (basic and acidic residues). A compositionally biased stretch (basic residues) spans 103 to 119 (EKKRARGQNKSRPHMKH). 2 C3H1-type zinc fingers span residues 122–152 (FEEN…HDVA) and 160–190 (EDIR…HLGD). FMN is bound by residues 300-302 (PLT) and Gln-354. Cys-385 serves as the catalytic Proton donor. FMN-binding positions include Lys-424, His-454, 486–488 (NGD), and 509–510 (AR).

The protein belongs to the Dus family. Dus3 subfamily. The cofactor is FMN.

It carries out the reaction 5,6-dihydrouridine(47) in tRNA + NAD(+) = uridine(47) in tRNA + NADH + H(+). The enzyme catalyses 5,6-dihydrouridine(47) in tRNA + NADP(+) = uridine(47) in tRNA + NADPH + H(+). The catalysed reaction is a 5,6-dihydrouridine in mRNA + NAD(+) = a uridine in mRNA + NADH + H(+). It catalyses the reaction a 5,6-dihydrouridine in mRNA + NADP(+) = a uridine in mRNA + NADPH + H(+). Catalyzes the synthesis of dihydrouridine, a modified base, in various RNAs, such as tRNAs, mRNAs and some long non-coding RNAs (lncRNAs). Mainly modifies the uridine in position 47 (U47) in the D-loop of most cytoplasmic tRNAs. Also able to mediate the formation of dihydrouridine in some mRNAs, thereby regulating their translation. The polypeptide is tRNA-dihydrouridine(47) synthase [NAD(P)(+)]-like (dus3l) (Xenopus tropicalis (Western clawed frog)).